Here is a 499-residue protein sequence, read N- to C-terminus: MTYLLALDQGTSSSRSIVFDRGGRIRAMAQREFRQLYPQPGWVEHDPMEIWETQLATAREALAQAGLTASDIAAIGITNQRETTLLWERASGRPIANAIVWQDRRTEPLCARWREQGLADAVRDVTGLVIDPYFSASKIAWLLDHVPGARTRAERGELAFGTVDSWLLRQLTGGRVHATDTTNASRTMLFDIDRGAWSEPLLAALDIPRALLPAVQQSASHFGDTEPALLGHAVPVCGIAGDQQAALFGQAGFQAGLAKNTYGTGCFLLMHTGAQRQASTHGLITTAAAQVDSTAPRQYALEGSVFIGGAVVQWLRDGLHAIRGSGEVQALAESVPDAGGVVVVPAFTGLGAPYWRPEASGAIVGLTRGSTVAHIARAALESIAFQSAALLDAMSRDAVAAGGQPVSELRVDGGACVNDLLMQFQADLLGIPVVRPQVIETTALGAACLAGLGCGLYAGTDELAAQWQAERRFLPTMPRERAAERMARWERAVRQTVAP.

T11 contributes to the ADP binding site. T11, S12, and S13 together coordinate ATP. T11 contacts sn-glycerol 3-phosphate. R15 is an ADP binding site. Residues R81, E82, Y133, and D242 each coordinate sn-glycerol 3-phosphate. Positions 81, 82, 133, 242, and 243 each coordinate glycerol. The ADP site is built by T264 and G309. The ATP site is built by T264, G309, Q313, and G414. ADP is bound by residues G414 and N418.

This sequence belongs to the FGGY kinase family.

It carries out the reaction glycerol + ATP = sn-glycerol 3-phosphate + ADP + H(+). Its pathway is polyol metabolism; glycerol degradation via glycerol kinase pathway; sn-glycerol 3-phosphate from glycerol: step 1/1. Inhibited by fructose 1,6-bisphosphate (FBP). In terms of biological role, key enzyme in the regulation of glycerol uptake and metabolism. Catalyzes the phosphorylation of glycerol to yield sn-glycerol 3-phosphate. The polypeptide is Glycerol kinase (Methylibium petroleiphilum (strain ATCC BAA-1232 / LMG 22953 / PM1)).